Consider the following 169-residue polypeptide: ATP synthase subunit b (169 aa).

A helical transmembrane segment spans residues 13-33 (LFLFQLINFLIIVFILKKFLF).

This sequence belongs to the ATPase B chain family. F-type ATPases have 2 components, F(1) - the catalytic core - and F(0) - the membrane proton channel. F(1) has five subunits: alpha(3), beta(3), gamma(1), delta(1), epsilon(1). F(0) has three main subunits: a(1), b(2) and c(10-14). The alpha and beta chains form an alternating ring which encloses part of the gamma chain. F(1) is attached to F(0) by a central stalk formed by the gamma and epsilon chains, while a peripheral stalk is formed by the delta and b chains.

It localises to the cell inner membrane. Its function is as follows. F(1)F(0) ATP synthase produces ATP from ADP in the presence of a proton or sodium gradient. F-type ATPases consist of two structural domains, F(1) containing the extramembraneous catalytic core and F(0) containing the membrane proton channel, linked together by a central stalk and a peripheral stalk. During catalysis, ATP synthesis in the catalytic domain of F(1) is coupled via a rotary mechanism of the central stalk subunits to proton translocation. In terms of biological role, component of the F(0) channel, it forms part of the peripheral stalk, linking F(1) to F(0). This chain is ATP synthase subunit b, found in Endomicrobium trichonymphae.